We begin with the raw amino-acid sequence, 547 residues long: Chaperonin GroEL (547 aa).

ATP is bound by residues 30–33 (TLGP), Lys-51, 87–91 (DGTTT), Gly-415, 479–481 (NAA), and Asp-495.

The protein belongs to the chaperonin (HSP60) family. In terms of assembly, forms a cylinder of 14 subunits composed of two heptameric rings stacked back-to-back. Interacts with the co-chaperonin GroES.

Its subcellular location is the cytoplasm. The catalysed reaction is ATP + H2O + a folded polypeptide = ADP + phosphate + an unfolded polypeptide.. In terms of biological role, together with its co-chaperonin GroES, plays an essential role in assisting protein folding. The GroEL-GroES system forms a nano-cage that allows encapsulation of the non-native substrate proteins and provides a physical environment optimized to promote and accelerate protein folding. This Pseudomonas paraeruginosa (strain DSM 24068 / PA7) (Pseudomonas aeruginosa (strain PA7)) protein is Chaperonin GroEL.